We begin with the raw amino-acid sequence, 70 residues long: U2-agatoxin-Ao1n (70 aa).

Residues 1-20 form the signal peptide; sequence MRAIISLLLISAMVFYIIAA. Residues 21 to 34 constitute a propeptide that is removed on maturation; sequence VPEEEGLQLSEDER. 3 disulfide bridges follow: Cys37/Cys53, Cys44/Cys58, and Cys52/Cys68. A Leucine amide modification is found at Leu69.

It belongs to the neurotoxin 01 (U2-agtx) family. Expressed by the venom gland.

It is found in the secreted. Insect active toxin causing rapid but reversible paralysis in crickets. No activity shown in mammals. Does not show effect on mammalian voltage-gated calcium channels. The protein is U2-agatoxin-Ao1n of Agelena orientalis (Funnel-web spider).